Here is a 486-residue protein sequence, read N- to C-terminus: Transcriptional regulator ERG (486 aa).

Over residues 41–54 the composition is skewed to polar residues; it reads TASSSSDYGQTSKM. Disordered stretches follow at residues 41–62 and 79–99; these read TASS…PQQD and PSQV…KGGK. A phosphoserine mark is found at Ser55, Ser88, and Ser103. The PNT domain occupies 120-206; sequence VPPPNMTTNE…SHLHYLRETP (87 aa). The tract at residues 249-311 is disordered; sequence QRITTRPDLP…ILGPTSSRLA (63 aa). Polar residues predominate over residues 271–284; sequence SHLTPQSKAAQPSP. Lys289 participates in a covalent cross-link: Glycyl lysine isopeptide (Lys-Gly) (interchain with G-Cter in SUMO2). The segment at residues 318–398 is a DNA-binding region (ETS); that stretch reads IQLWQFLLEL…HGKRYAYKFD (81 aa).

This sequence belongs to the ETS family. As to quaternary structure, identified in a IGF2BP1-dependent mRNP granule complex containing untranslated mRNAs. Interacts with SETDB1.

It localises to the nucleus. It is found in the cytoplasm. Its function is as follows. Transcriptional regulator. May participate in transcriptional regulation through the recruitment of SETDB1 histone methyltransferase and subsequent modification of local chromatin structure. This is Transcriptional regulator ERG (Erg) from Mus musculus (Mouse).